The following is a 271-amino-acid chain: Formamidopyrimidine-DNA glycosylase (271 aa).

Pro2 serves as the catalytic Schiff-base intermediate with DNA. Glu3 (proton donor) is an active-site residue. The active-site Proton donor; for beta-elimination activity is the Lys58. DNA contacts are provided by His92, Arg111, and Arg152. An FPG-type zinc finger spans residues 237-271 (FVYGREGEACKQCGRVLKHATIGQRATVWCGSCQR). Arg261 functions as the Proton donor; for delta-elimination activity in the catalytic mechanism.

It belongs to the FPG family. As to quaternary structure, monomer. It depends on Zn(2+) as a cofactor.

It catalyses the reaction Hydrolysis of DNA containing ring-opened 7-methylguanine residues, releasing 2,6-diamino-4-hydroxy-5-(N-methyl)formamidopyrimidine.. The catalysed reaction is 2'-deoxyribonucleotide-(2'-deoxyribose 5'-phosphate)-2'-deoxyribonucleotide-DNA = a 3'-end 2'-deoxyribonucleotide-(2,3-dehydro-2,3-deoxyribose 5'-phosphate)-DNA + a 5'-end 5'-phospho-2'-deoxyribonucleoside-DNA + H(+). Functionally, involved in base excision repair of DNA damaged by oxidation or by mutagenic agents. Acts as a DNA glycosylase that recognizes and removes damaged bases. Has a preference for oxidized purines, such as 7,8-dihydro-8-oxoguanine (8-oxoG). Has AP (apurinic/apyrimidinic) lyase activity and introduces nicks in the DNA strand. Cleaves the DNA backbone by beta-delta elimination to generate a single-strand break at the site of the removed base with both 3'- and 5'-phosphates. The protein is Formamidopyrimidine-DNA glycosylase of Xanthomonas axonopodis pv. citri (strain 306).